Consider the following 220-residue polypeptide: Adenylate kinase (220 aa).

10–15 (GSGKST) provides a ligand contact to ATP. Residues 30–59 (SSGDIIRAEISSRTPLGLEMEKYLSRGDLI) form an NMP region. AMP contacts are provided by residues serine 31, arginine 36, 57–59 (DLI), 83–86 (GYPR), and glutamine 90. An LID region spans residues 124–161 (GRRICSKCGAVYHIEFNPPKIPGKCDICGGDLIQRPDD). Arginine 125 contributes to the ATP binding site. Zn(2+) is bound by residues cysteine 128 and cysteine 131. Residue 134-135 (VY) participates in ATP binding. 2 residues coordinate Zn(2+): cysteine 148 and cysteine 151. Positions 158 and 169 each coordinate AMP. Glycine 197 contributes to the ATP binding site.

It belongs to the adenylate kinase family. As to quaternary structure, monomer.

It localises to the cytoplasm. It carries out the reaction AMP + ATP = 2 ADP. Its pathway is purine metabolism; AMP biosynthesis via salvage pathway; AMP from ADP: step 1/1. Catalyzes the reversible transfer of the terminal phosphate group between ATP and AMP. Plays an important role in cellular energy homeostasis and in adenine nucleotide metabolism. The sequence is that of Adenylate kinase from Pyrococcus horikoshii (strain ATCC 700860 / DSM 12428 / JCM 9974 / NBRC 100139 / OT-3).